We begin with the raw amino-acid sequence, 253 residues long: PAXIP1-associated glutamate-rich protein 1A (253 aa).

Disordered stretches follow at residues 1–108 (MSLA…MPPP) and 126–253 (LQAE…QRKY). A compositionally biased stretch (basic and acidic residues) spans 45–66 (KAEEEGKGSQEEAGREGSRPEE). Residues 115–159 (YELLATQGTLELQAEILPRRPPTPEAQSEEERSDEEPEAKEEEEE) are sufficient for interaction with NCOA1. The residue at position 137 (T137) is a Phosphothreonine. A compositionally biased stretch (acidic residues) spans 141 to 158 (QSEEERSDEEPEAKEEEE). Residues S142 and S147 each carry the phosphoserine modification. Positions 160 to 253 (KPHMPTEFDF…NSLFPRQRKY (94 aa)) are sufficient for interaction with ESR1. The segment covering 194–222 (QKREARLDKVLSDMKRHKKLEEQILRTGR) has biased composition (basic and acidic residues). S236 carries the phosphoserine modification. The segment covering 238–247 (PLRSSGNSLF) has biased composition (polar residues).

As to quaternary structure, component of the KMT2 family MLL2/MLL3 complex, at least composed of the histone methyltransferases KMT2D and/or KMT2C, the common subunits ASH2L, RBBP5, WDR5 and DPY30, and the complex type-specific subunits PAXIP1/PTIP, PAGR1, NCOA6 and KDM6A; PAXIP1 is required for the association with the MLL2/MLL3 complex. Forms a constitutive complex with PAXIP1/PTIP independently of the MLL2/MLL3 complex. Interacts with NCOA1, ESR1, NR3C1, AR.

The protein localises to the nucleus. Its function is as follows. Its association with the histone methyltransferase MLL2/MLL3 complex is suggesting a role in epigenetic transcriptional activation. However, in association with PAXIP1/PTIP is proposed to function at least in part independently of the MLL2/MLL3 complex. Proposed to be recruited by PAXIP1 to sites of DNA damage where the PAGR1:PAXIP1 complex is required for cell survival in response to DNA damage independently of the MLL2/MLL3 complex. However, its function in DNA damage has been questioned. During immunoglobulin class switching in activated B-cells is involved in transcription regulation of downstream switch regions at the immunoglobulin heavy-chain (Igh) locus independently of the MLL2/MLL3 complex. Involved in both estrogen receptor-regulated gene transcription and estrogen-stimulated G1/S cell-cycle transition. Acts as a transcriptional cofactor for nuclear hormone receptors. Inhibits the induction properties of several steroid receptors such as NR3C1, AR and PPARG; the mechanism of inhibition appears to be gene-dependent. May be involved in the regulation of the BMP pathway in extraembryonic development. The protein is PAXIP1-associated glutamate-rich protein 1A of Mus musculus (Mouse).